The following is a 306-amino-acid chain: Type 3 secretion system translocon protein SctB (306 aa).

The chain crosses the membrane as a helical span at residues 128–152; the sequence is LMIAMAVVSGIMAATSTVASAFSIA.

The protein belongs to the SctB/YopD family. The core secretion machinery of the T3SS is composed of approximately 20 different proteins, including cytoplasmic components, a base, an export apparatus and a needle. This subunit is involved in the formation of a pore, called the translocon, in host membrane. Interacts with YopB/SctE and YopE. Together with YopB/SctE, forms a multimeric integral membrane complex with a mass of between 500 and 700 kDa. Interacts with its cognate chaperone SycD.

The protein localises to the secreted. It localises to the host membrane. In terms of biological role, component of the type III secretion system (T3SS), also called injectisome, which is used to inject bacterial effector proteins into eukaryotic host cells. YopB/SctE and YopD/SctB are inserted into the host membrane where they form a pore and allow the translocation of effector proteins into the cytosol of target cells. Its function is as follows. Involved in pathogenesis. Essential for the establishment of Yersinia infections in a mouse model system, but not for the targeting of effector Yops. May modulate the host's immune response at a distance from the site of infection. This chain is Type 3 secretion system translocon protein SctB, found in Yersinia enterocolitica.